The sequence spans 171 residues: MIDKYEDPFIRIAVMIGGDEYLKVARSLLKAEDATDEEIASSTGLRINMVRKVLYDLFGKSLISGVRVKDERKGWFVYRWRSRREEVESFIENQKKKIMGRLQQRLDYENSSEFYHCGNDDCQRITFEGALEEMFKCPSCGKVLNLKKNDKAKKAFGKKIDEIKKDLQQTF.

The HTH TFE/IIEalpha-type domain occupies 5-88; sequence YEDPFIRIAV…RWRSRREEVE (84 aa).

Belongs to the TFE family. In terms of assembly, monomer. Interaction with RNA polymerase subunits RpoF and RpoE is necessary for Tfe stimulatory transcription activity. Able to interact with Tbp and RNA polymerase in the absence of DNA promoter. Interacts both with the preinitiation and elongation complexes.

Its function is as follows. Transcription factor that plays a role in the activation of archaeal genes transcribed by RNA polymerase. Facilitates transcription initiation by enhancing TATA-box recognition by TATA-box-binding protein (Tbp), and transcription factor B (Tfb) and RNA polymerase recruitment. Not absolutely required for transcription in vitro, but particularly important in cases where Tbp or Tfb function is not optimal. It dynamically alters the nucleic acid-binding properties of RNA polymerases by stabilizing the initiation complex and destabilizing elongation complexes. Seems to translocate with the RNA polymerase following initiation and acts by binding to the non template strand of the transcription bubble in elongation complexes. In Cenarchaeum symbiosum (strain A), this protein is Transcription factor E.